The chain runs to 64 residues: Alpha-mammal toxin AnCra1 (64 aa).

An LCN-type CS-alpha/beta domain is found at 2–64 (KDGYIVDDVN…VRTKGPGRCN (63 aa)). 4 cysteine pairs are disulfide-bonded: C12–C63, C16–C36, C22–C46, and C26–C48.

Belongs to the long (4 C-C) scorpion toxin superfamily. Sodium channel inhibitor family. Alpha subfamily. In terms of tissue distribution, expressed by the venom gland.

Its subcellular location is the secreted. Functionally, alpha toxins bind voltage-independently at site-3 of sodium channels (Nav) and inhibit the inactivation of the activated channels, thereby blocking neuronal transmission. This toxin is active against mammals. The recombinant toxin selectively inhibits the fast inactivation of hNav1.7/SCN9A channel (EC(50)=136.7 nM). Is potent in inhibiting the fast inactivation of hNav1.7 and has little effect on the steady-state inactivation. In vivo, intravenous injection into mice induces muscle contraction, leading to severe paralysis and death. The protein is Alpha-mammal toxin AnCra1 of Androctonus crassicauda (Arabian fat-tailed scorpion).